A 349-amino-acid polypeptide reads, in one-letter code: Dehydrogenase FPY6 (349 aa).

This sequence belongs to the Gfo/Idh/MocA family.

Its pathway is secondary metabolite biosynthesis. Dehydrogenase; part of the gene cluster that mediates the biosynthesis of the gamma-pyrones fusapyrone (FPY) and deoxyfusapyrone (dFPY). FPY is an undecaketide and thus likely synthesized by the polyketide synthase FPY1 from acetyl-CoA functioning as starter unit and the addition of 10 malonyl-CoA extender units by successive Claisen-condensations. Next to this, FPY shares some rare features: C-glycosylated 4-deoxyglucose at C-3, a gem-dimethyl group at C-13, and an alpha-beta to beta-gamma double bond shift at C-20. During FPY biosynthesis mono-C-methyl groups are transferred to the tetra-, penta-, hexa- and heptaketide, while two C-methyl groups are transferred to the nonaketide, suggesting that the CMet domain is programmed to selectively catalyze two successive C-alpha-methylation reactions of the nonaketide, while other alpha-carbons are non- or mono-methylated only. While the origin of the 4'-deoxyglucose moiety remains opaque, its transfer to C-3 is most likely mediated by the C-glycosyltransferase FPY2. Next to this, the hydroxyl group present at C-33 and discriminating between FPY and dFPY, is likely to be installed by the cytochrome P450 monooxygenase FPY7. No putative function can be predicted for the remaining genes FPY3-FPY6. The protein is Dehydrogenase FPY6 of Fusarium mangiferae (Mango malformation disease fungus).